We begin with the raw amino-acid sequence, 118 residues long: Ribulose bisphosphate carboxylase small subunit (118 aa).

Belongs to the RuBisCO small chain family. Heterohexadecamer of 8 large and 8 small subunits.

Functionally, ruBisCO catalyzes two reactions: the carboxylation of D-ribulose 1,5-bisphosphate, the primary event in carbon dioxide fixation, as well as the oxidative fragmentation of the pentose substrate. Both reactions occur simultaneously and in competition at the same active site. Although the small subunit is not catalytic it is essential for maximal activity. In Thiobacillus denitrificans (strain ATCC 25259 / T1), this protein is Ribulose bisphosphate carboxylase small subunit.